The primary structure comprises 254 residues: Adenosylcobinamide-GDP ribazoletransferase (254 aa).

Helical transmembrane passes span 29–49, 50–70, 98–118, 121–141, 170–190, 198–218, and 230–250; these read LFWF…LGYF, TSLL…GIAL, IMKD…MMLL, IAIL…GVLL, AGVV…FPLL, LYAV…TGLL, and VLGA…ALSA.

It belongs to the CobS family. The cofactor is Mg(2+).

It localises to the cell inner membrane. The enzyme catalyses alpha-ribazole + adenosylcob(III)inamide-GDP = adenosylcob(III)alamin + GMP + H(+). It catalyses the reaction alpha-ribazole 5'-phosphate + adenosylcob(III)inamide-GDP = adenosylcob(III)alamin 5'-phosphate + GMP + H(+). It functions in the pathway cofactor biosynthesis; adenosylcobalamin biosynthesis; adenosylcobalamin from cob(II)yrinate a,c-diamide: step 7/7. Its function is as follows. Joins adenosylcobinamide-GDP and alpha-ribazole to generate adenosylcobalamin (Ado-cobalamin). Also synthesizes adenosylcobalamin 5'-phosphate from adenosylcobinamide-GDP and alpha-ribazole 5'-phosphate. The chain is Adenosylcobinamide-GDP ribazoletransferase from Pelodictyon phaeoclathratiforme (strain DSM 5477 / BU-1).